The following is a 380-amino-acid chain: Cytochrome b (380 aa).

The next 4 membrane-spanning stretches (helical) occupy residues 33-53 (FGSL…FLAM), 77-98 (WLIR…FIHV), 113-133 (WNIG…GYVL), and 178-198 (FFAF…VHLL). 2 residues coordinate heme b: histidine 83 and histidine 97. Residues histidine 182 and histidine 196 each coordinate heme b. Residue histidine 201 participates in a ubiquinone binding. The next 4 helical transmembrane spans lie at 226–246 (IKDI…VLFF), 288–308 (LGGV…PLLN), 320–340 (ITQT…WIGG), and 347–367 (FTTI…IFMP).

Belongs to the cytochrome b family. As to quaternary structure, the cytochrome bc1 complex contains 11 subunits: 3 respiratory subunits (MT-CYB, CYC1 and UQCRFS1), 2 core proteins (UQCRC1 and UQCRC2) and 6 low-molecular weight proteins (UQCRH/QCR6, UQCRB/QCR7, UQCRQ/QCR8, UQCR10/QCR9, UQCR11/QCR10 and a cleavage product of UQCRFS1). This cytochrome bc1 complex then forms a dimer. Requires heme b as cofactor.

Its subcellular location is the mitochondrion inner membrane. Functionally, component of the ubiquinol-cytochrome c reductase complex (complex III or cytochrome b-c1 complex) that is part of the mitochondrial respiratory chain. The b-c1 complex mediates electron transfer from ubiquinol to cytochrome c. Contributes to the generation of a proton gradient across the mitochondrial membrane that is then used for ATP synthesis. In Microryzomys minutus (Forest small rice rat), this protein is Cytochrome b (MT-CYB).